Here is an 895-residue protein sequence, read N- to C-terminus: Zinc finger protein 574 (895 aa).

3 C2H2-type zinc fingers span residues 16-38 (YVCSECNQLYGSLEEVLMHQNSH), 76-98 (YQCLECGQLLMSPSQLLEHQELH), and 126-148 (YECVDCKALFASQELWLNHRQTH). At serine 164 the chain carries Phosphoserine. The C2H2-type 4 zinc-finger motif lies at 214 to 236 (YKCSECSQLFQLPADFLEHQATH). Residues 239 to 301 (APVPESQEPA…RARRNNSGEA (63 aa)) form a disordered region. Residues 247 to 257 (PALQQEVQASS) are compositionally biased toward polar residues. Positions 274–287 (HSYELRNGEAIGRD) are enriched in basic and acidic residues. Residue serine 298 is modified to Phosphoserine. 4 consecutive C2H2-type zinc fingers follow at residues 309–331 (LFCSACDQLFLSPHQLQQHLRSH), 336–358 (FKCPLCSRVFPSPSSLDQHLGDH), 364–386 (FLCVDCGLAFGTEALLLAHRRAH), and 392–413 (HSCPCGKTFVNLTKFLYHRRTH). The disordered stretch occupies residues 434–460 (FPEPAPAETGEPEAPEPPVSEETSAGP). C2H2-type zinc fingers lie at residues 466 to 489 (YRCLLCSREFGKALQLTRHQRFVH), 495 to 517 (HKCSICGKMFKKKSHVRNHLRTH), 523 to 545 (FPCPDCSKPFNSPANLARHRLTH), 551 to 573 (YRCGDCGKAFTQSSTLRQHRLVH), 579 to 601 (YRCQECGVRFHRPYRLLMHRYHH), and 607 to 630 (YKCRECPRSFLLRRLLEVHQLVVH). A C2H2-type 15; degenerate zinc finger spans residues 636–659 (HRCPSCGAAFPSSLRLREHRCAAA). The segment at 667 to 689 (FECGTCGKKVGSAARLQAHEAAH) adopts a C2H2-type 16 zinc-finger fold. Residues 687–732 (AAHAAAGPGEVLAKEPPAPRAPRATRAPVASPAALGGTATASPAPA) are disordered. Over residues 707–731 (APRATRAPVASPAALGGTATASPAP) the composition is skewed to low complexity. Serine 717 is modified (phosphoserine). Threonine 724 is subject to Phosphothreonine. A Phosphoserine modification is found at serine 728. 4 consecutive C2H2-type zinc fingers follow at residues 737–759 (LECSECKKLFSTETSLQVHRRIH), 765–787 (YPCPDCGKAFRQSTHLKDHRRLH), 793–815 (FACEVCGKAFAISMRLAEHRRIH), and 821–843 (YSCPDCGKSYRSFSNLWKHRKTH). Arginine 831 carries the asymmetric dimethylarginine modification.

It belongs to the krueppel C2H2-type zinc-finger protein family.

It is found in the nucleus. Its function is as follows. May be involved in transcriptional regulation. This chain is Zinc finger protein 574 (ZNF574), found in Pongo abelii (Sumatran orangutan).